The sequence spans 260 residues: Putative methylesterase 19 (260 aa).

S81 functions as the Acyl-ester intermediate in the catalytic mechanism. Active-site charge relay system residues include D210 and H238.

This sequence belongs to the AB hydrolase superfamily. Methylesterase family.

Functionally, putative methylesterase. The sequence is that of Putative methylesterase 19 from Arabidopsis thaliana (Mouse-ear cress).